The sequence spans 570 residues: Low-affinity glucose transporter HXT1 (570 aa).

The segment covering methionine 1 to glutamate 20 has biased composition (polar residues). The disordered stretch occupies residues methionine 1–alanine 51. Residues methionine 1–glycine 60 are Cytoplasmic-facing. 3 positions are modified to phosphoserine: serine 23, serine 38, and serine 44. The span at glycine 34–leucine 43 shows a compositional bias: basic and acidic residues. Residues valine 61 to tryptophan 81 form a helical membrane-spanning segment. The Extracellular segment spans residues aspartate 82–glycine 116. The helical transmembrane segment at leucine 117–glycine 137 threads the bilayer. The Cytoplasmic portion of the chain corresponds to aspartate 138 to arginine 143. Residues isoleucine 144–isoleucine 164 traverse the membrane as a helical segment. At asparagine 165–arginine 174 the chain is on the extracellular side. Residues isoleucine 175–valine 195 form a helical membrane-spanning segment. Topologically, residues alanine 196–arginine 201 are cytoplasmic. A helical membrane pass occupies residues glycine 202 to threonine 222. Residues asparagine 223–arginine 236 are Extracellular-facing. The N-linked (GlcNAc...) asparagine glycan is linked to asparagine 228. A helical transmembrane segment spans residues valine 237 to proline 257. Over glutamate 258–aspartate 340 the chain is Cytoplasmic. Residues asparagine 341–serine 357 traverse the membrane as a helical segment. The Extracellular segment spans residues aspartate 358–serine 363. The helical transmembrane segment at isoleucine 364–valine 381 threads the bilayer. The Cytoplasmic segment spans residues aspartate 382–asparagine 388. The chain crosses the membrane as a helical span at residues cysteine 389 to valine 409. Residues threonine 410–valine 431 are Extracellular-facing. A helical membrane pass occupies residues phenylalanine 432–isoleucine 452. The Cytoplasmic portion of the chain corresponds to serine 453–serine 469. Residues alanine 470–isoleucine 490 traverse the membrane as a helical segment. Asparagine 491 is a topological domain (extracellular). Residues phenylalanine 492–phenylalanine 512 form a helical membrane-spanning segment. Residues valine 513–lysine 570 lie on the Cytoplasmic side of the membrane.

The protein belongs to the major facilitator superfamily. Sugar transporter (TC 2.A.1.1) family.

The protein resides in the membrane. Functionally, low-affinity glucose transporter. HXT1 is as well involved in the transport of mannose. In Saccharomyces cerevisiae (strain ATCC 204508 / S288c) (Baker's yeast), this protein is Low-affinity glucose transporter HXT1 (HXT1).